The following is a 48-amino-acid chain: Phospholipase A2 TI-Nh (48 aa).

His25 is a catalytic residue. Asp26 lines the Ca(2+) pocket.

Belongs to the phospholipase A2 family. Group I subfamily. D49 sub-subfamily. As to quaternary structure, monomer. It depends on Ca(2+) as a cofactor. As to expression, expressed by the venom gland.

The protein localises to the secreted. The catalysed reaction is a 1,2-diacyl-sn-glycero-3-phosphocholine + H2O = a 1-acyl-sn-glycero-3-phosphocholine + a fatty acid + H(+). Functionally, phospholipase A2 with weak enzymatic activity, which partially inhibits thrombin enzymatic activity (Ki=73 nM), completely inhibits thrombin-induced platelet aggregation and retards fibrin clot formation (IC(50)=0.2 nM). May exert this anticoagulant effect through a non-enzymatic mechanism. The polypeptide is Phospholipase A2 TI-Nh (Naja haje haje (Egyptian cobra)).